Here is a 601-residue protein sequence, read N- to C-terminus: Elongation factor 4 (601 aa).

In terms of domain architecture, tr-type G spans 8–189; that stretch reads EQIRNFGIIA…LIVRKAPPPK (182 aa). 20–25 contributes to the GTP binding site; the sequence is DHGKST.

The protein belongs to the TRAFAC class translation factor GTPase superfamily. Classic translation factor GTPase family. LepA subfamily.

The protein localises to the cell membrane. It carries out the reaction GTP + H2O = GDP + phosphate + H(+). In terms of biological role, required for accurate and efficient protein synthesis under certain stress conditions. May act as a fidelity factor of the translation reaction, by catalyzing a one-codon backward translocation of tRNAs on improperly translocated ribosomes. Back-translocation proceeds from a post-translocation (POST) complex to a pre-translocation (PRE) complex, thus giving elongation factor G a second chance to translocate the tRNAs correctly. Binds to ribosomes in a GTP-dependent manner. In Tropheryma whipplei (strain TW08/27) (Whipple's bacillus), this protein is Elongation factor 4.